A 454-amino-acid chain; its full sequence is Phosphoglucosamine mutase (454 aa).

Residue S101 is the Phosphoserine intermediate of the active site. 4 residues coordinate Mg(2+): S101, D243, D245, and D247. A Phosphoserine modification is found at S101.

The protein belongs to the phosphohexose mutase family. Mg(2+) is required as a cofactor. Post-translationally, activated by phosphorylation.

The enzyme catalyses alpha-D-glucosamine 1-phosphate = D-glucosamine 6-phosphate. In terms of biological role, catalyzes the conversion of glucosamine-6-phosphate to glucosamine-1-phosphate. The polypeptide is Phosphoglucosamine mutase (Geotalea daltonii (strain DSM 22248 / JCM 15807 / FRC-32) (Geobacter daltonii)).